The primary structure comprises 1560 residues: Tenascin-N (1560 aa).

Positions 1 to 26 (MGLWGMLAFPLGFLLASVLLVASAPA) are cleaved as a signal peptide. 3 consecutive EGF-like domains span residues 167–198 (DQPTCPGACNGHGRCVDGQCVCDAPYVGVDCA), 199–229 (YAACPQDCSGHGVCVQGVCQCHEDFTAEDCS), and 230–260 (EQRCPGDCSGNGFCDTGECYCEMGFTGPDCS). Disulfide bonds link Cys171–Cys181, Cys175–Cys186, Cys188–Cys197, Cys202–Cys212, Cys206–Cys217, Cys219–Cys228, Cys233–Cys243, Cys237–Cys248, and Cys250–Cys259. Fibronectin type-III domains lie at 264 to 353 (APQG…DLAV), 354 to 444 (VGTA…TEID), 445 to 532 (GPTN…TEID), 533 to 622 (SPEN…IDSP), 623 to 706 (KNLV…APTD), 709 to 798 (GPKN…IDSP), 799 to 882 (KNLV…APTD), 885 to 970 (GPKN…APTD), 973 to 1062 (SPKN…IDSP), 1063 to 1144 (KNLV…TKAP), 1149 to 1238 (SPKN…IDPP), and 1239 to 1325 (RNLR…VDAR). 2 disordered regions span residues 868-888 (GTQESRKTSTKAPTDIDGPKN) and 1044-1063 (GARESKKANTEGHTDIDSPK). Residues 1044-1061 (GARESKKANTEGHTDIDS) show a composition bias toward basic and acidic residues. A Fibrinogen C-terminal domain is found at 1323 to 1540 (DARFPHPSDC…YVELKIRPFG (218 aa)). Asn1411 carries an N-linked (GlcNAc...) asparagine glycan.

The protein belongs to the tenascin family. Homohexamer. Highest expression in kidney followed by spleen and brain. In brain, highest expression is found in hippocampus, cerebellum and olfactory bulb. Expressed in aortic valve, corneal limbus. Expressed in ribs periosteum. During a fracture repair process, expression increases in cells of newly formed perichondrium/peristeum surrounding the cartalaginous callus.

The protein localises to the secreted. It is found in the extracellular space. The protein resides in the extracellular matrix. In terms of biological role, extracellular matrix protein that seems to be a ligand for ITGA8:ITGB1, ITGAV:ITGB1 and ITGA4:ITGB1. Involved in neurite outgrowth and cell migration in hippocampal explants. During endochondral bone formation, inhibits proliferation and differentiation of proteoblasts mediated by canonical WNT signaling. In tumors, stimulates angiogenesis by elongation, migration and sprouting of endothelial cells. Expressed in most mammary tumors, may facilitate tumorigenesis by supporting the migratory behavior of breast cancer cells. The sequence is that of Tenascin-N from Mus musculus (Mouse).